The chain runs to 102 residues: Large ribosomal subunit protein uL24 (102 aa).

The protein belongs to the universal ribosomal protein uL24 family. In terms of assembly, part of the 50S ribosomal subunit.

One of two assembly initiator proteins, it binds directly to the 5'-end of the 23S rRNA, where it nucleates assembly of the 50S subunit. In terms of biological role, one of the proteins that surrounds the polypeptide exit tunnel on the outside of the subunit. The protein is Large ribosomal subunit protein uL24 of Polynucleobacter asymbioticus (strain DSM 18221 / CIP 109841 / QLW-P1DMWA-1) (Polynucleobacter necessarius subsp. asymbioticus).